The chain runs to 516 residues: Probable 2-methylcitrate dehydratase (516 aa).

This sequence belongs to the PrpD family.

The catalysed reaction is (2S,3S)-2-methylcitrate = 2-methyl-cis-aconitate + H2O. It participates in organic acid metabolism; propanoate degradation. Functionally, catalyzes the stereospecific dehydration of (2S,3S)-2-methylcitrate (2-MC) to yield the cis isomer of 2-methyl-aconitate. The protein is Probable 2-methylcitrate dehydratase (PDH1) of Saccharomyces cerevisiae (strain ATCC 204508 / S288c) (Baker's yeast).